Here is a 485-residue protein sequence, read N- to C-terminus: Ribulose bisphosphate carboxylase large chain (485 aa).

N124 and T174 together coordinate substrate. Residue K176 is the Proton acceptor of the active site. K178 lines the substrate pocket. Mg(2+) is bound by residues K202, D204, and E205. K202 is modified (N6-carboxylysine). H294 acts as the Proton acceptor in catalysis. Residues R295, H327, and S379 each contribute to the substrate site.

The protein belongs to the RuBisCO large chain family. Type I subfamily. In terms of assembly, heterohexadecamer of 8 large chains and 8 small chains. Mg(2+) serves as cofactor.

It catalyses the reaction 2 (2R)-3-phosphoglycerate + 2 H(+) = D-ribulose 1,5-bisphosphate + CO2 + H2O. The catalysed reaction is D-ribulose 1,5-bisphosphate + O2 = 2-phosphoglycolate + (2R)-3-phosphoglycerate + 2 H(+). RuBisCO catalyzes two reactions: the carboxylation of D-ribulose 1,5-bisphosphate, the primary event in carbon dioxide fixation, as well as the oxidative fragmentation of the pentose substrate. Both reactions occur simultaneously and in competition at the same active site. This chain is Ribulose bisphosphate carboxylase large chain, found in Rhodopseudomonas palustris (strain HaA2).